The following is a 161-amino-acid chain: N5-carboxyaminoimidazole ribonucleotide mutase (161 aa).

Positions 9, 12, and 39 each coordinate substrate.

Belongs to the AIR carboxylase family. Class I subfamily.

It carries out the reaction 5-carboxyamino-1-(5-phospho-D-ribosyl)imidazole + H(+) = 5-amino-1-(5-phospho-D-ribosyl)imidazole-4-carboxylate. It participates in purine metabolism; IMP biosynthesis via de novo pathway; 5-amino-1-(5-phospho-D-ribosyl)imidazole-4-carboxylate from 5-amino-1-(5-phospho-D-ribosyl)imidazole (N5-CAIR route): step 2/2. Its function is as follows. Catalyzes the conversion of N5-carboxyaminoimidazole ribonucleotide (N5-CAIR) to 4-carboxy-5-aminoimidazole ribonucleotide (CAIR). This chain is N5-carboxyaminoimidazole ribonucleotide mutase, found in Vibrio vulnificus (strain CMCP6).